The chain runs to 57 residues: UPF0391 membrane protein bsl6560 (57 aa).

2 helical membrane passes run 4–24 (WVVT…GGIA) and 30–50 (IAKI…VVGL).

This sequence belongs to the UPF0391 family.

It is found in the cell membrane. This chain is UPF0391 membrane protein bsl6560, found in Bradyrhizobium diazoefficiens (strain JCM 10833 / BCRC 13528 / IAM 13628 / NBRC 14792 / USDA 110).